Reading from the N-terminus, the 93-residue chain is uncharacterized protein (93 aa).

Positions 1–76 constitute a Sm domain; sequence MDSHTTEKRR…IQTIEPDESM (76 aa).

As to quaternary structure, part of the core SMN complex at least composed of smn1, yip11/gem2, gem6, gem7 and gem8. Interacts with gem7; the interaction is direct.

The SMN complex catalyzes the assembly of small nuclear ribonucleoproteins (snRNPs), the building blocks of the spliceosome, and thereby plays an important role in the splicing of cellular pre-mRNAs. Most spliceosomal snRNPs contain a common set of Sm proteins smb1, smd1, smd2, smd3, sme1, smf1 and smg1 that assemble in a heptameric protein ring on the Sm site of the small nuclear RNA to form the core snRNP (Sm core). In the cytosol, the Sm proteins smd1, smd2, sme1, smf1 and smg1 (5Sm) are trapped in an inactive 6S pICln-Sm complex by the chaperone saf5. To complete assembly of core snRNPs, the SMN complex accepts 5Sm from saf5. Binding of snRNA inside 5Sm triggers eviction of the SMN complex, thereby allowing binding of smd3 and smb1 to complete assembly of the core snRNP. This is an uncharacterized protein from Schizosaccharomyces pombe (strain 972 / ATCC 24843) (Fission yeast).